Reading from the N-terminus, the 1784-residue chain is Protein mel-28 (1784 aa).

Positions 1–956 (MDNENSSIFK…QNDDEDMPEV (956 aa)) are required for nuclear envelope and kinetochore localization. A required for association with mitotic chromosomes region spans residues 566–778 (GKIEEFCQLA…TSPEDSEHSE (213 aa)). The important for nuclear localization stretch occupies residues 846 to 1071 (APMTVTIGKH…HNSILKTAKG (226 aa)). 2 disordered regions span residues 945-994 (KVQN…AKRI) and 1115-1784 (ETMT…RAKQ). Residues 1126 to 1149 (GKHDEEKDSEKNVVDEMEEVKDQE) show a composition bias toward basic and acidic residues. Acidic residues-rich tracts occupy residues 1222–1232 (LEEEGEDEDIW) and 1266–1278 (VNEE…EEVQ). The interval 1239-1601 (FEVQMDEDCE…TTVDPSSSAL (363 aa)) is chromatin binding. Residues 1279–1293 (QDAKEPEKTEKRQEE) show a composition bias toward basic and acidic residues. Over residues 1297–1306 (EVMQPVIPEE) the composition is skewed to low complexity. Acidic residues predominate over residues 1321–1336 (ELQEEPDIVPTGDEDT). Positions 1337-1351 (ADKVQEQAVEEDRPP) are enriched in basic and acidic residues. Residues 1352 to 1366 (SRNTRSSSVQKSTSQ) show a composition bias toward polar residues. Residues 1367-1382 (VEDRDPKELVEEERPP) show a composition bias toward basic and acidic residues. Residues 1383–1398 (SRNTRSASVQKSSNQE) show a composition bias toward polar residues. Over residues 1428 to 1444 (KVKDQKPEELIEEDRPP) the composition is skewed to basic and acidic residues. A compositionally biased stretch (polar residues) spans 1445–1459 (SRNTRSASAQKTVAA). Over residues 1533-1546 (AAASTSSSRAGSVT) the composition is skewed to low complexity. The span at 1566 to 1576 (VQEEEEEEAEE) shows a compositional bias: acidic residues. Over residues 1581-1606 (SRSTRSASVKNTTVDPSSSALASTKR) the composition is skewed to polar residues. The tract at residues 1601 to 1784 (LASTKRTTSR…LLRSARRAKQ (184 aa)) is important for nuclear localization. Positions 1630–1642 (TPKRGRPAKKDAG) form a DNA-binding region, a.T hook 1. The required for chromosome segregation, nuclear growth, nucleoplasmic accumulation and cell cycle timing, but not required for nuclear envelope and kinetochore localization stretch occupies residues 1630-1784 (TPKRGRPAKK…LLRSARRAKQ (155 aa)). Over residues 1716 to 1735 (AGTSKQSRSVTRSRASSIDV) the composition is skewed to polar residues. A DNA-binding region (a.T hook 2) is located at residues 1746–1758 (KRGRGRPPKTVLE).

As to expression, ubiquitously expressed (at protein level).

It is found in the nucleus. The protein resides in the nucleoplasm. Its subcellular location is the nucleus envelope. It localises to the nucleus inner membrane. The protein localises to the nuclear pore complex. It is found in the chromosome. The protein resides in the centromere. Its subcellular location is the kinetochore. Functionally, nuclear envelope protein which has essential roles in assembly of nuclear pore complexes and in chromatin maintenance during the cell cycle. Appears to be a stable structural component of the nuclear envelope during interphase. In dividing cells, localizes to kinetochores during early stages of mitosis and then to chromatin during late mitosis. Important for several mitotic processes including chromosome condensation, kinetochore assembly, chromosome segregation and cell-cycle timing. In postmitotic cells, plays a role in the early steps of nuclear pore complex assembly by recruiting the nucleoporins npp-10 and npp-5 to chromatin. Also involved in meiotic chromosome segregation. May function downstream of the Ran GTPase signaling pathway. In Caenorhabditis elegans, this protein is Protein mel-28.